The chain runs to 176 residues: RNA polymerase sigma factor SigZ (176 aa).

A Polymerase core binding motif is present at residues 30-43 (DLLQIVFMKIQVHL). The H-T-H motif DNA-binding region spans 125 to 144 (QKELSEKLGISYSGAKSRVQ).

Belongs to the sigma-70 factor family. ECF subfamily.

In terms of biological role, sigma factors are initiation factors that promote the attachment of RNA polymerase to specific initiation sites and are then released. The chain is RNA polymerase sigma factor SigZ (sigZ) from Bacillus subtilis (strain 168).